We begin with the raw amino-acid sequence, 104 residues long: Large ribosomal subunit protein uL24 (104 aa).

Belongs to the universal ribosomal protein uL24 family. In terms of assembly, part of the 50S ribosomal subunit.

In terms of biological role, one of two assembly initiator proteins, it binds directly to the 5'-end of the 23S rRNA, where it nucleates assembly of the 50S subunit. Its function is as follows. One of the proteins that surrounds the polypeptide exit tunnel on the outside of the subunit. This is Large ribosomal subunit protein uL24 from Yersinia pseudotuberculosis serotype O:1b (strain IP 31758).